Consider the following 264-residue polypeptide: Thiazole synthase (264 aa).

Lys-106 acts as the Schiff-base intermediate with DXP in catalysis. 1-deoxy-D-xylulose 5-phosphate-binding positions include Gly-167, 193-194 (AG), and 215-216 (NS).

It belongs to the ThiG family. As to quaternary structure, homotetramer. Forms heterodimers with either ThiH or ThiS.

It is found in the cytoplasm. It catalyses the reaction [ThiS sulfur-carrier protein]-C-terminal-Gly-aminoethanethioate + 2-iminoacetate + 1-deoxy-D-xylulose 5-phosphate = [ThiS sulfur-carrier protein]-C-terminal Gly-Gly + 2-[(2R,5Z)-2-carboxy-4-methylthiazol-5(2H)-ylidene]ethyl phosphate + 2 H2O + H(+). It functions in the pathway cofactor biosynthesis; thiamine diphosphate biosynthesis. Its function is as follows. Catalyzes the rearrangement of 1-deoxy-D-xylulose 5-phosphate (DXP) to produce the thiazole phosphate moiety of thiamine. Sulfur is provided by the thiocarboxylate moiety of the carrier protein ThiS. In vitro, sulfur can be provided by H(2)S. This is Thiazole synthase from Ectopseudomonas mendocina (strain ymp) (Pseudomonas mendocina).